The chain runs to 372 residues: Probable E3 ubiquitin-protein ligase makorin-1 (372 aa).

2 C3H1-type zinc fingers span residues 20-45 (KHVT…HDLT) and 48-75 (KPAA…HCKP). A disordered region spans residues 78–110 (NEEFSSPQMLPPSSPSPSTDPESSQPAPRPKTQ). Residues 93-103 (SPSTDPESSQP) show a composition bias toward low complexity. A C3H1-type 3 zinc finger spans residues 153-180 (ALRKQLCPYAAVGECRYGINCAYLHGDV). Positions 181 to 208 (CDMCGLQVLHPTDNSQRSQHTKACIEAH) are makorin-type Cys-His. The RING-type zinc-finger motif lies at 226–280 (CGVCMEVVFEKANPSERRFGILSNCNHCYCLKCIRKWRSAKQFESKIIKSCPECR). The C3H1-type 4 zinc-finger motif lies at 309–338 (GMGRKPCRYFDEGRGICPFGANCFYKHAFP).

It catalyses the reaction S-ubiquitinyl-[E2 ubiquitin-conjugating enzyme]-L-cysteine + [acceptor protein]-L-lysine = [E2 ubiquitin-conjugating enzyme]-L-cysteine + N(6)-ubiquitinyl-[acceptor protein]-L-lysine.. It functions in the pathway protein modification; protein ubiquitination. In terms of biological role, E3 ubiquitin ligase catalyzing the covalent attachment of ubiquitin moieties onto substrate proteins. The sequence is that of Probable E3 ubiquitin-protein ligase makorin-1 from Tetraodon nigroviridis (Spotted green pufferfish).